We begin with the raw amino-acid sequence, 589 residues long: Ubiquilin-1 (589 aa).

Positions 1–11 (MAESGESGGPP) are enriched in gly residues. 2 disordered regions span residues 1-35 (MAES…AEPK) and 110-145 (NRPQ…ATSN). Ala-2 carries the post-translational modification N-acetylalanine. Residues 12-35 (GSQDSAAGAEGAGAPAAAASAEPK) are compositionally biased toward low complexity. A Ubiquitin-like domain is found at 37 to 111 (MKVTVKTPKE…VHLVIKTQNR (75 aa)). Positions 110–124 (NRPQDHSAQQTNTAG) are enriched in polar residues. Positions 125 to 145 (SNVTTSSTPNSNSTSGSATSN) are enriched in low complexity. The interval 178 to 428 (QLLSNPEMMV…LNNPLFAGNP (251 aa)) is interaction with UBXN4. STI1 domains follow at residues 182 to 210 (NPEM…QLIM) and 212 to 251 (NPQM…MQEM). The tract at residues 295–371 (PFASLVSNTS…NLVPGVGASM (77 aa)) is disordered. Over residues 299 to 313 (LVSNTSSGEGSQPSR) the composition is skewed to polar residues. A compositionally biased stretch (low complexity) spans 327 to 360 (QTSQSSSASSGTASTVGGTTGSTASGTSGQSTTA). STI1 domains are found at residues 387–434 (NPQL…QEQM) and 438–470 (LPTF…QQGL). The tract at residues 488–520 (LGALGSTGGSSGTNGSNATPSENTSPTAGTTEP) is disordered. The segment covering 489 to 499 (GALGSTGGSSG) has biased composition (gly residues). The span at 509–520 (ENTSPTAGTTEP) shows a compositional bias: polar residues. One can recognise a UBA domain in the interval 546 to 586 (RFQQQLEQLSAMGFLNREANLQALIATGGDINAAIERLLGS).

As to quaternary structure, monomer and homodimer. Heterodimer with UBQLN2. Binds CD47, NBL1, GABRA1, GABRA2, GABRA3, GABRA6, GABRB1, GABRB2 and GABRB3. Binds UBE3A, BTRC, P4HB and MTOR. Interacts with the proteasome 19S subunit. Interacts (via ubiquitin-like domain) with TREX1; the interaction is direct and may control TREX1 subcellular location. Forms a complex with UBXN4 and VCP. Interacts (via UBA domain) with UBQLN4 (via ubiquitin-like domain). Found in a complex with UBQLN2 and MAP1LC3A/B/C. The monomeric form interacts with PSEN2. The monomeric form interacts with PSEN1. Interacts with ORAI1. Interacts (via UBA domain) with TICAM1. Interacts with EPS15. Interacts (via UBA domain) with UBA52 and (via ubiquitin-like domain) with PSMD3 and PSMD4. Interacts with HERPUD1. Interacts with MAP1LC3A/B/C in the presence of UBQLN4. Interacts (via ubiquitin-like domain) with EPS15 (via UIM domains) and both the ubiquitinated and non-ubiquitinated forms can interact with EPS15. Interacts (via ubiquitin-like domain) with EPS15L1, HGS (via UIM domain) and STAM2 (via UIM domain). Interacts with BCL2L10/BCL-B; in the cytoplasm. In terms of assembly, monomeric form interacts with PSEN1. Degraded during both macroautophagy and during chaperone-mediated autophagy (CMA). In terms of processing, phosphorylated. Post-translationally, ubiquitinated. Brain (at protein level). Ubiquitous. Highly expressed throughout the brain; detected in neurons and in neuropathological lesions, such as neurofibrillary tangles and Lewy bodies. Highly expressed in heart, placenta, pancreas, lung, liver, skeletal muscle and kidney.

The protein resides in the cytoplasm. The protein localises to the nucleus. Its subcellular location is the endoplasmic reticulum. It localises to the cytoplasmic vesicle. It is found in the autophagosome. The protein resides in the cell membrane. Its function is as follows. Plays an important role in the regulation of different protein degradation mechanisms and pathways including ubiquitin-proteasome system (UPS), autophagy and endoplasmic reticulum-associated protein degradation (ERAD) pathway. Mediates the proteasomal targeting of misfolded or accumulated proteins for degradation by binding (via UBA domain) to their polyubiquitin chains and by interacting (via ubiquitin-like domain) with the subunits of the proteasome. Plays a role in the ERAD pathway via its interaction with ER-localized proteins UBXN4, VCP and HERPUD1 and may form a link between the polyubiquitinated ERAD substrates and the proteasome. Involved in the regulation of macroautophagy and autophagosome formation; required for maturation of autophagy-related protein LC3 from the cytosolic form LC3-I to the membrane-bound form LC3-II and may assist in the maturation of autophagosomes to autolysosomes by mediating autophagosome-lysosome fusion. Negatively regulates the TICAM1/TRIF-dependent toll-like receptor signaling pathway by decreasing the abundance of TICAM1 via the autophagic pathway. Promotes the ubiquitination and lysosomal degradation of ORAI1, consequently down-regulating the ORAI1-mediated Ca2+ mobilization. Suppresses the maturation and proteasomal degradation of amyloid beta A4 protein (A4) by stimulating the lysine 63 (K63)-linked polyubiquitination. Delays the maturation of A4 by sequestering it in the Golgi apparatus and preventing its transport to the cell surface for subsequent processing. Ubiquitinates BCL2L10 and thereby stabilizes protein abundance. Plays a role in unfolded protein response (UPR) by attenuating the induction of UPR-inducible genes, DDTI3/CHOP, HSPA5 and PDIA2 during ER stress. Plays a key role in the regulation of the levels of PSEN1 by targeting its accumulation to aggresomes which may then be removed from cells by autophagocytosis. In terms of biological role, plays a role in unfolded protein response (UPR) by attenuating the induction of UPR-inducible genes, DDTI3/CHOP, HSPA5 and PDIA2 during ER stress. This is Ubiquilin-1 (UBQLN1) from Homo sapiens (Human).